The primary structure comprises 147 residues: uncharacterized protein (147 aa).

To M.jannaschii MJ1086 N-terminal region.

This is an uncharacterized protein from Methanocaldococcus jannaschii (strain ATCC 43067 / DSM 2661 / JAL-1 / JCM 10045 / NBRC 100440) (Methanococcus jannaschii).